Reading from the N-terminus, the 425-residue chain is Potassium/proton antiporter CemA (425 aa).

A helical transmembrane segment spans residues 89-109 (LFLTTVKCLFILLFVPLGINF). Positions 159 to 278 (LSENQIFFGL…KTDFASVFRT (120 aa)) are insert. The interval 173–192 (STFPSSEKSQKSEHFSNQDE) is disordered. Basic and acidic residues predominate over residues 180–192 (KSQKSEHFSNQDE). Transmembrane regions (helical) follow at residues 300–320 (IEAI…CYLL), 350–370 (ILFI…ELFF), and 386–406 (IFLL…YLIF).

It belongs to the CemA family.

It localises to the plastid. Its subcellular location is the chloroplast inner membrane. It catalyses the reaction K(+)(in) + H(+)(out) = K(+)(out) + H(+)(in). Its function is as follows. Contributes to K(+)/H(+) antiport activity by supporting proton efflux to control proton extrusion and homeostasis in chloroplasts in a light-dependent manner to modulate photosynthesis. Prevents excessive induction of non-photochemical quenching (NPQ) under continuous-light conditions. Indirectly promotes efficient inorganic carbon uptake into chloroplasts. The chain is Potassium/proton antiporter CemA from Tetradesmus obliquus (Green alga).